Consider the following 227-residue polypeptide: Probable GTP-binding protein EngB (227 aa).

In terms of domain architecture, EngB-type G spans 41–216; that stretch reads GRPEVAFAGR…RAEIARFAVP (176 aa). GTP is bound by residues 49–56, 76–80, 94–97, 161–164, and 195–197; these read GRSNVGKS, GRTKQ, DMPG, TKCD, and TSS. Mg(2+) contacts are provided by Ser-56 and Thr-78.

This sequence belongs to the TRAFAC class TrmE-Era-EngA-EngB-Septin-like GTPase superfamily. EngB GTPase family. It depends on Mg(2+) as a cofactor.

Its function is as follows. Necessary for normal cell division and for the maintenance of normal septation. The sequence is that of Probable GTP-binding protein EngB from Gluconobacter oxydans (strain 621H) (Gluconobacter suboxydans).